A 97-amino-acid polypeptide reads, in one-letter code: Acylphosphatase (97 aa).

Residues 7–97 (RLTAWVHGHV…QERFEGFVER (91 aa)) enclose the Acylphosphatase-like domain. Residues Arg-22 and Asn-40 contribute to the active site.

It belongs to the acylphosphatase family.

The enzyme catalyses an acyl phosphate + H2O = a carboxylate + phosphate + H(+). This chain is Acylphosphatase (acyP), found in Mycobacterium avium (strain 104).